Consider the following 1045-residue polypeptide: Suppression of tumorigenicity 18 protein (1045 aa).

3 disordered regions span residues 38–90 (KKRR…NDHA), 158–228 (KAES…YNRK), and 340–364 (PRVTDANGRQIFTNKHSPRPERREA). Residues 52–63 (NKRKSLLMKPRH) show a composition bias toward basic residues. 2 stretches are compositionally biased toward basic and acidic residues: residues 69–90 (GCKESPDNRNEDDGLLETNDHA) and 159–177 (AESDEAHEGSMVHSDNGRD). 6 CCHHC-type zinc fingers span residues 357 to 400 (PRPE…PLEI), 401 to 444 (LAMH…KLAM), 713 to 756 (RDLK…LKSL), 757 to 800 (MAAN…GIKM), 805 to 848 (EEKE…QKEN), and 858 to 901 (KLNK…IKKV). 24 residues coordinate Zn(2+): C366, C371, H384, C390, C410, C415, H428, C434, C722, C727, H740, C746, C766, C771, H784, C790, C814, C819, H832, C838, C867, C872, H885, and C891. Residues 918–987 (IDGDEEIRHL…KELAGLSQAL (70 aa)) are a coiled coil.

The protein belongs to the MYT1 family.

The protein localises to the nucleus. Functionally, repressor that binds to DNA sequences containing a bipartite element consisting of a direct repeat of the sequence 5'-AAAGTTT-3' separated by 2-9 nucleotides. Represses basal transcription activity from target promoters. In Mus musculus (Mouse), this protein is Suppression of tumorigenicity 18 protein (St18).